The following is a 912-amino-acid chain: Serine/threonine-protein kinase D1 (912 aa).

The residue at position 95 (Tyr95) is a Phosphotyrosine. A Phorbol-ester/DAG-type 1 zinc finger spans residues 146-196; sequence PHALFVHSYRAPAFCDHCGEMLWGLVRQGLKCEGCGLNYHKRCAFKIPNNC. Ser205, Ser208, Ser219, and Ser223 each carry phosphoserine. The segment at 270-320 adopts a Phorbol-ester/DAG-type 2 zinc-finger fold; the sequence is PHTFVIHSYTRPTVCQYCKKLLKGLFRQGLQCKDCRFNCHKRCAPKVPNNC. Ser345 bears the Phosphoserine mark. The interval 377–402 is disordered; that stretch reads NDSGEMQDPDPDHEDANRTISPSTSN. Phosphoserine; by MAPK13 is present on residues Ser397 and Ser401. The region spanning 422 to 541 is the PH domain; sequence TVMKEGWMVH…WEIAIQHALM (120 aa). A Phosphotyrosine modification is found at Tyr432. The residue at position 448 (Ser448) is a Phosphoserine. The residue at position 463 (Tyr463) is a Phosphotyrosine; by ABL. At Ser473 the chain carries Phosphoserine. Phosphotyrosine is present on Tyr502. A Phosphoserine modification is found at Ser548. In terms of domain architecture, Protein kinase spans 583–839; that stretch reads IFPDEVLGSG…VDKTLSHPWL (257 aa). ATP is bound by residues 589–597 and Lys612; that span reads LGSGQFGIV. Asp706 serves as the catalytic Proton acceptor. Ser738 bears the Phosphoserine; by PKC/PRKCD mark. Phosphoserine; by autocatalysis and PKC/PRKCD is present on Ser742. Tyr749 carries the phosphotyrosine modification. At Ser910 the chain carries Phosphoserine; by autocatalysis.

It belongs to the protein kinase superfamily. CAMK Ser/Thr protein kinase family. PKD subfamily. In terms of assembly, interacts (via N-terminus) with ADAP1/CENTA1. Interacts with MAPK13. Interacts with DAPK1 in an oxidative stress-regulated manner. Interacts with USP28; the interaction induces phosphorylation of USP28 and activated KRAS-mediated stabilization of ZNF304. Interacts with AKAP13 (via C-terminal domain). Mg(2+) serves as cofactor. Phosphorylated at Ser-397 and Ser-401 by MAPK13 during regulation of insulin secretion in pancreatic beta cells. Phosphorylated by DAPK1. Phosphorylated at Tyr-95 and by ABL at Tyr-463, which primes the kinase in response to oxidative stress, and promotes a second step activating phosphorylation at Ser-738/Ser-742 by PKRD. Phosphorylated on Ser-910 upon S.enterica infection in macrophages.

The protein resides in the cytoplasm. It localises to the cell membrane. The protein localises to the golgi apparatus. It is found in the trans-Golgi network. It catalyses the reaction L-seryl-[protein] + ATP = O-phospho-L-seryl-[protein] + ADP + H(+). The enzyme catalyses L-threonyl-[protein] + ATP = O-phospho-L-threonyl-[protein] + ADP + H(+). Activated by DAG and phorbol esters. Phorbol-ester/DAG-type domain 1 binds DAG with high affinity and appears to play the dominant role in mediating translocation to the cell membrane and trans-Golgi network. Phorbol-ester/DAG-type domain 2 binds phorbol ester with higher affinity. Autophosphorylation of Ser-742 and phosphorylation of Ser-738 by PKC relieves auto-inhibition by the PH domain. Phosphorylation on Tyr-463 by the SRC-ABL1 pathway in response to oxidative stress, is also required for activation. Activated by DAPK1 under oxidative stress. Its function is as follows. Serine/threonine-protein kinase that converts transient diacylglycerol (DAG) signals into prolonged physiological effects downstream of PKC, and is involved in the regulation of MAPK8/JNK1 and Ras signaling, Golgi membrane integrity and trafficking, cell survival through NF-kappa-B activation, cell migration, cell differentiation by mediating HDAC7 nuclear export, cell proliferation via MAPK1/3 (ERK1/2) signaling, and plays a role in cardiac hypertrophy, VEGFA-induced angiogenesis, genotoxic-induced apoptosis and flagellin-stimulated inflammatory response. Phosphorylates the epidermal growth factor receptor (EGFR) on dual threonine residues, which leads to the suppression of epidermal growth factor (EGF)-induced MAPK8/JNK1 activation and subsequent JUN phosphorylation. Phosphorylates RIN1, inducing RIN1 binding to 14-3-3 proteins YWHAB, YWHAE and YWHAZ and increased competition with RAF1 for binding to GTP-bound form of Ras proteins (NRAS, HRAS and KRAS). Acts downstream of the heterotrimeric G-protein beta/gamma-subunit complex to maintain the structural integrity of the Golgi membranes, and is required for protein transport along the secretory pathway. In the trans-Golgi network (TGN), regulates the fission of transport vesicles that are on their way to the plasma membrane. May act by activating the lipid kinase phosphatidylinositol 4-kinase beta (PI4KB) at the TGN for the local synthesis of phosphorylated inositol lipids, which induces a sequential production of DAG, phosphatidic acid (PA) and lyso-PA (LPA) that are necessary for membrane fission and generation of specific transport carriers to the cell surface. Under oxidative stress, is phosphorylated at Tyr-463 via SRC-ABL1 and contributes to cell survival by activating IKK complex and subsequent nuclear translocation and activation of NFKB1. Involved in cell migration by regulating integrin alpha-5/beta-3 recycling and promoting its recruitment in newly forming focal adhesion. In osteoblast differentiation, mediates the bone morphogenetic protein 2 (BMP2)-induced nuclear export of HDAC7, which results in the inhibition of HDAC7 transcriptional repression of RUNX2. In neurons, plays an important role in neuronal polarity by regulating the biogenesis of TGN-derived dendritic vesicles, and is involved in the maintenance of dendritic arborization and Golgi structure in hippocampal cells. May potentiate mitogenesis induced by the neuropeptide bombesin or vasopressin by mediating an increase in the duration of MAPK1/3 (ERK1/2) signaling, which leads to accumulation of immediate-early gene products including FOS that stimulate cell cycle progression. Plays an important role in the proliferative response induced by low calcium in keratinocytes, through sustained activation of MAPK1/3 (ERK1/2) pathway. Downstream of novel PKC signaling, plays a role in cardiac hypertrophy by phosphorylating HDAC5, which in turn triggers XPO1/CRM1-dependent nuclear export of HDAC5, MEF2A transcriptional activation and induction of downstream target genes that promote myocyte hypertrophy and pathological cardiac remodeling. Mediates cardiac troponin I (TNNI3) phosphorylation at the PKA sites, which results in reduced myofilament calcium sensitivity, and accelerated crossbridge cycling kinetics. The PRKD1-HDAC5 pathway is also involved in angiogenesis by mediating VEGFA-induced specific subset of gene expression, cell migration, and tube formation. In response to VEGFA, is necessary and required for HDAC7 phosphorylation which induces HDAC7 nuclear export and endothelial cell proliferation and migration. During apoptosis induced by cytarabine and other genotoxic agents, PRKD1 is cleaved by caspase-3 at Asp-378, resulting in activation of its kinase function and increased sensitivity of cells to the cytotoxic effects of genotoxic agents. In epithelial cells, is required for transducing flagellin-stimulated inflammatory responses by binding and phosphorylating TLR5, which contributes to MAPK14/p38 activation and production of inflammatory cytokines. Acts as an activator of NLRP3 inflammasome assembly by mediating phosphorylation of NLRP3. May play a role in inflammatory response by mediating activation of NF-kappa-B. May be involved in pain transmission by directly modulating TRPV1 receptor. Plays a role in activated KRAS-mediated stabilization of ZNF304 in colorectal cancer (CRC) cells. Regulates nuclear translocation of transcription factor TFEB in macrophages upon live S.enterica infection. The chain is Serine/threonine-protein kinase D1 (PRKD1) from Homo sapiens (Human).